Reading from the N-terminus, the 94-residue chain is Co-chaperonin GroES (94 aa).

Belongs to the GroES chaperonin family. Heptamer of 7 subunits arranged in a ring. Interacts with the chaperonin GroEL.

It is found in the cytoplasm. In terms of biological role, together with the chaperonin GroEL, plays an essential role in assisting protein folding. The GroEL-GroES system forms a nano-cage that allows encapsulation of the non-native substrate proteins and provides a physical environment optimized to promote and accelerate protein folding. GroES binds to the apical surface of the GroEL ring, thereby capping the opening of the GroEL channel. This is Co-chaperonin GroES from Ehrlichia ruminantium (strain Gardel).